Here is a 270-residue protein sequence, read N- to C-terminus: Small ribosomal subunit protein eS1 (270 aa).

Disordered stretches follow at residues 1–21 (MAVG…KKKV) and 238–270 (GGGK…QESV).

Belongs to the eukaryotic ribosomal protein eS1 family. As to quaternary structure, component of the small ribosomal subunit. Mature ribosomes consist of a small (40S) and a large (60S) subunit. The 40S subunit contains about 33 different proteins and 1 molecule of RNA (18S). The 60S subunit contains about 49 different proteins and 3 molecules of RNA (28S, 5.8S and 5S).

It is found in the cytoplasm. This is Small ribosomal subunit protein eS1 from Aedes aegypti (Yellowfever mosquito).